We begin with the raw amino-acid sequence, 77 residues long: Small ribosomal subunit protein uS17 (77 aa).

It belongs to the universal ribosomal protein uS17 family. Part of the 30S ribosomal subunit.

One of the primary rRNA binding proteins, it binds specifically to the 5'-end of 16S ribosomal RNA. The protein is Small ribosomal subunit protein uS17 of Rickettsia canadensis (strain McKiel).